A 588-amino-acid polypeptide reads, in one-letter code: Adenine deaminase (588 aa).

It belongs to the metallo-dependent hydrolases superfamily. Adenine deaminase family. In terms of assembly, homodimer. The cofactor is Mn(2+).

It carries out the reaction adenine + H2O + H(+) = hypoxanthine + NH4(+). This is Adenine deaminase from Escherichia coli (strain K12 / DH10B).